A 313-amino-acid chain; its full sequence is Ribosomal RNA small subunit methyltransferase H (313 aa).

Residues 35 to 37 (GGH), Asp-55, Phe-79, Asp-101, and Gln-108 contribute to the S-adenosyl-L-methionine site.

It belongs to the methyltransferase superfamily. RsmH family.

The protein localises to the cytoplasm. The catalysed reaction is cytidine(1402) in 16S rRNA + S-adenosyl-L-methionine = N(4)-methylcytidine(1402) in 16S rRNA + S-adenosyl-L-homocysteine + H(+). Its function is as follows. Specifically methylates the N4 position of cytidine in position 1402 (C1402) of 16S rRNA. The sequence is that of Ribosomal RNA small subunit methyltransferase H from Escherichia coli O127:H6 (strain E2348/69 / EPEC).